The following is a 321-amino-acid chain: NADPH-dependent D-xylose reductase (321 aa).

Tyr50 functions as the Proton donor in the catalytic mechanism. His112 contributes to the substrate binding site. NADP(+) is bound by residues 167-168, 216-225, and 272-282; these read SN, SSFGPQSFVE, and KSNKKERLLGN.

This sequence belongs to the aldo/keto reductase family.

The enzyme catalyses xylitol + NAD(+) = D-xylose + NADH + H(+). It carries out the reaction xylitol + NADP(+) = D-xylose + NADPH + H(+). It functions in the pathway carbohydrate metabolism; D-xylose degradation. Functionally, reduces D-xylose into xylitol. Preferentially utilizes NADPH as a cosubstrate. The protein is NADPH-dependent D-xylose reductase (XYL1) of Candida boidinii (Yeast).